A 405-amino-acid polypeptide reads, in one-letter code: 4-hydroxy-3-methylbut-2-en-1-yl diphosphate synthase (flavodoxin) (405 aa).

Residues C297, C300, C343, and E350 each coordinate [4Fe-4S] cluster.

The protein belongs to the IspG family. It depends on [4Fe-4S] cluster as a cofactor.

It carries out the reaction (2E)-4-hydroxy-3-methylbut-2-enyl diphosphate + oxidized [flavodoxin] + H2O + 2 H(+) = 2-C-methyl-D-erythritol 2,4-cyclic diphosphate + reduced [flavodoxin]. The protein operates within isoprenoid biosynthesis; isopentenyl diphosphate biosynthesis via DXP pathway; isopentenyl diphosphate from 1-deoxy-D-xylulose 5-phosphate: step 5/6. Functionally, converts 2C-methyl-D-erythritol 2,4-cyclodiphosphate (ME-2,4cPP) into 1-hydroxy-2-methyl-2-(E)-butenyl 4-diphosphate. The protein is 4-hydroxy-3-methylbut-2-en-1-yl diphosphate synthase (flavodoxin) of Francisella tularensis subsp. novicida (strain U112).